Here is a 185-residue protein sequence, read N- to C-terminus: Homeobox protein TGIF2LY (185 aa).

2 disordered regions span residues 1–58 and 166–185; these read MEAA…GNLP and RCQERSNQIRSRPLARSSPE. Positions 21–39 are enriched in polar residues; that stretch reads AKTQSPAQDTSIMSRNNAD. Residues 48 to 111 constitute a DNA-binding region (homeobox; TALE-type); it reads EHKKKRKGNL…INARRRILPD (64 aa).

The protein belongs to the TALE/TGIF homeobox family. As to expression, specifically expressed in adult testis.

The protein localises to the nucleus. Its function is as follows. May have a transcription role in testis. May act as a competitor/regulator of TGIF2LX. In Homo sapiens (Human), this protein is Homeobox protein TGIF2LY (TGIF2LY).